The following is a 612-amino-acid chain: Kelch repeat and BTB domain-containing protein 3 (612 aa).

Residues 52–119 (YDFKIIMKDE…AYTGKTKITD (68 aa)) enclose the BTB domain. The 101-residue stretch at 150–250 (NLVNCLQLLS…VRLHQLSEET (101 aa)) folds into the BACK domain. 5 Kelch repeats span residues 291-337 (STTE…GSSL), 339-390 (SYGE…STMK), 400-450 (MALD…PEAS), 452-502 (CQNV…ATLI), and 548-595 (GIED…FYCQ).

The chain is Kelch repeat and BTB domain-containing protein 3 from Pongo abelii (Sumatran orangutan).